Here is a 358-residue protein sequence, read N- to C-terminus: S-adenosylmethionine:tRNA ribosyltransferase-isomerase (358 aa).

This sequence belongs to the QueA family. In terms of assembly, monomer.

It localises to the cytoplasm. It catalyses the reaction 7-aminomethyl-7-carbaguanosine(34) in tRNA + S-adenosyl-L-methionine = epoxyqueuosine(34) in tRNA + adenine + L-methionine + 2 H(+). Its pathway is tRNA modification; tRNA-queuosine biosynthesis. Its function is as follows. Transfers and isomerizes the ribose moiety from AdoMet to the 7-aminomethyl group of 7-deazaguanine (preQ1-tRNA) to give epoxyqueuosine (oQ-tRNA). In Chelativorans sp. (strain BNC1), this protein is S-adenosylmethionine:tRNA ribosyltransferase-isomerase.